A 284-amino-acid chain; its full sequence is Digeranylgeranylglyceryl phosphate synthase (284 aa).

7 consecutive transmembrane segments (helical) span residues 10–30 (IHNVIGAGLGAFTGYVASSMW), 37–57 (LILAVLVVALVDAGGNAINDV), 76–98 (AVSLRTATSLSYGLMGVGVILSA), 102–119 (YLQFLVALLTSVALIFYA), 126–146 (GIYGNLVVATATALSLFYGGL), 217–237 (LPLFLGYNILYGIVLVPFLYI), and 260–280 (GSAFLGMVAFALGSLPFQFLF).

It belongs to the UbiA prenyltransferase family. DGGGP synthase subfamily. Mg(2+) serves as cofactor.

Its subcellular location is the cell membrane. The enzyme catalyses sn-3-O-(geranylgeranyl)glycerol 1-phosphate + (2E,6E,10E)-geranylgeranyl diphosphate = 2,3-bis-O-(geranylgeranyl)-sn-glycerol 1-phosphate + diphosphate. Its pathway is membrane lipid metabolism; glycerophospholipid metabolism. Prenyltransferase that catalyzes the transfer of the geranylgeranyl moiety of geranylgeranyl diphosphate (GGPP) to the C2 hydroxyl of (S)-3-O-geranylgeranylglyceryl phosphate (GGGP). This reaction is the second ether-bond-formation step in the biosynthesis of archaeal membrane lipids. This chain is Digeranylgeranylglyceryl phosphate synthase, found in Metallosphaera sedula (strain ATCC 51363 / DSM 5348 / JCM 9185 / NBRC 15509 / TH2).